The following is a 225-amino-acid chain: Ribosomal RNA small subunit methyltransferase G (225 aa).

Residues Gly-71, Leu-76, 121-122 (AE), and Arg-139 contribute to the S-adenosyl-L-methionine site. Residues 204 to 225 (VVEARRATPSNGRGRPGRSSRR) are disordered.

It belongs to the methyltransferase superfamily. RNA methyltransferase RsmG family.

The protein localises to the cytoplasm. In terms of biological role, specifically methylates the N7 position of guanine in position 518 of 16S rRNA. In Mycobacterium sp. (strain KMS), this protein is Ribosomal RNA small subunit methyltransferase G.